The following is a 385-amino-acid chain: Cytochrome b (385 aa).

4 helical membrane passes run 34-54 (FGSL…LLTM), 78-99 (WFIR…FIHI), 114-134 (WYSG…GYVL), and 179-199 (FLVL…IHLV). The heme b site is built by H84 and H98. Residues H183 and H197 each coordinate heme b. H202 contributes to the a ubiquinone binding site. 4 consecutive transmembrane segments (helical) span residues 227-247 (FKDI…SLLL), 289-309 (LAGI…PILI), 321-341 (LMQV…WLGA), and 348-368 (FILM…VMFP).

It belongs to the cytochrome b family. In terms of assembly, the cytochrome bc1 complex contains 3 respiratory subunits (MT-CYB, CYC1 and UQCRFS1), 2 core proteins (UQCRC1 and UQCRC2) and probably 6 low-molecular weight proteins. It depends on heme b as a cofactor.

The protein resides in the mitochondrion inner membrane. Functionally, component of the ubiquinol-cytochrome c reductase complex (complex III or cytochrome b-c1 complex) that is part of the mitochondrial respiratory chain. The b-c1 complex mediates electron transfer from ubiquinol to cytochrome c. Contributes to the generation of a proton gradient across the mitochondrial membrane that is then used for ATP synthesis. In Eptatretus burgeri (Inshore hagfish), this protein is Cytochrome b (MT-CYB).